We begin with the raw amino-acid sequence, 70 residues long: Protein SlyX homolog (70 aa).

Belongs to the SlyX family.

This Shewanella woodyi (strain ATCC 51908 / MS32) protein is Protein SlyX homolog.